Consider the following 415-residue polypeptide: MIDRKLLLQDFDKVALSLKKRNHAMDDELERLREAIAHYKKQLIELEGLQAFQNKVSKEFGIKMAQKMDTSDLKKELENNKIKLNELSKSVGEAEQEMDLKLSIIPNLVDEKTPLGASEEDNIEIKKILTPRNFTFKPKEHFELAQQNGWIDFESGVKLAKSRFSVIRGFGAKIYRALIHLMLDFNEKNGFEIIYTPALVNEKMLFGTGQLPKFKEDVFKIENENLYLIPTAEVTLTNLYNDTIISVENLPIKMTAHTPCFRSEAGSAGKDTRGMIRQHQFDKVELVAITHPKESDAMQEHMLESASEILKALELPHRFVQLCSGDLGFSASNTIDIEVWLPGQNCYREISSVSNTRDFQARRAKIRFKENQKNQLVHTLNGSSLAVGRTMVALMENHQQADGSIHIPKALEKYL.

Residue 231–233 (TAE) coordinates L-serine. 262 to 264 (RSE) provides a ligand contact to ATP. E285 serves as a coordination point for L-serine. 349-352 (EISS) provides a ligand contact to ATP. S383 is a binding site for L-serine.

This sequence belongs to the class-II aminoacyl-tRNA synthetase family. Type-1 seryl-tRNA synthetase subfamily. In terms of assembly, homodimer. The tRNA molecule binds across the dimer.

The protein resides in the cytoplasm. The catalysed reaction is tRNA(Ser) + L-serine + ATP = L-seryl-tRNA(Ser) + AMP + diphosphate + H(+). It carries out the reaction tRNA(Sec) + L-serine + ATP = L-seryl-tRNA(Sec) + AMP + diphosphate + H(+). The protein operates within aminoacyl-tRNA biosynthesis; selenocysteinyl-tRNA(Sec) biosynthesis; L-seryl-tRNA(Sec) from L-serine and tRNA(Sec): step 1/1. Catalyzes the attachment of serine to tRNA(Ser). Is also able to aminoacylate tRNA(Sec) with serine, to form the misacylated tRNA L-seryl-tRNA(Sec), which will be further converted into selenocysteinyl-tRNA(Sec). The polypeptide is Serine--tRNA ligase (Helicobacter pylori (strain J99 / ATCC 700824) (Campylobacter pylori J99)).